Here is a 652-residue protein sequence, read N- to C-terminus: Probable export ATP-binding/permease protein PFL_2149 (652 aa).

Positions 6–244 constitute an ABC transporter domain; it reads LHLTGISRSF…APSEPPVSVR (239 aa). ATP is bound at residue 42-49; it reads GASGSGKS. 5 helical membrane-spanning segments follow: residues 251-271, 277-297, 525-545, 586-606, and 615-635; these read LVAS…ALVS, LLTM…VAIG, LALL…IGVM, IGGA…TLFI, and MGSI…FGFV.

This sequence belongs to the ABC transporter superfamily. Macrolide exporter (TC 3.A.1.122) family. As to quaternary structure, probably part of a tripartite efflux system, which is composed of an inner membrane transporter, a periplasmic membrane fusion protein, and an outer membrane component.

The protein localises to the cell inner membrane. Functionally, probably part of a tripartite efflux system. The polypeptide is Probable export ATP-binding/permease protein PFL_2149 (Pseudomonas fluorescens (strain ATCC BAA-477 / NRRL B-23932 / Pf-5)).